The primary structure comprises 567 residues: Proton-coupled zinc antiporter SLC30A9, mitochondrial (567 aa).

The next 5 helical transmembrane spans lie at Val238–Ile258, Gly313–Leu333, Leu341–Val361, Val391–Gly411, and Ser423–Thr443. The short motif at Leu461–Leu465 is the LXXLL motif element.

It belongs to the cation diffusion facilitator (CDF) transporter (TC 2.A.4) family. SLC30A subfamily. In terms of assembly, interacts with GRIP1, ESR1, AR and CTNNB1.

It is found in the mitochondrion membrane. The protein resides in the nucleus. The protein localises to the endoplasmic reticulum. The enzyme catalyses Zn(2+)(in) + 2 H(+)(out) = Zn(2+)(out) + 2 H(+)(in). In terms of biological role, acts as a zinc transporter involved in intracellular zinc homeostasis. Functions as a secondary coactivator for nuclear receptors by cooperating with p160 coactivators subtypes. Plays a role in transcriptional activation of Wnt-responsive genes. Its function is as follows. Mitochondrial proton-coupled zinc ion antiporter mediating the export of zinc from the mitochondria and involved in zinc homeostasis, zinc mobilization as well as mitochondrial morphology and health. In nucleus, functions as a secondary coactivator for nuclear receptors by cooperating with p160 coactivators subtypes. Plays a role in transcriptional activation of Wnt-responsive genes. This is Proton-coupled zinc antiporter SLC30A9, mitochondrial (Slc30a9) from Mus musculus (Mouse).